Reading from the N-terminus, the 286-residue chain is Transcription factor MYB62 (286 aa).

HTH myb-type domains follow at residues 16 to 68 (DEEL…LNYL) and 69 to 123 (KPDI…QKQA). 2 consecutive DNA-binding regions (H-T-H motif) follow at residues 44–68 (WNHV…LNYL) and 96–119 (WSKI…RTRV).

Expressed in leaves and flowers.

It localises to the nucleus. In terms of biological role, transcription repressor of phosphate (Pi) starvation-induced genes. Negatively regulates Pi starvation responses via the repression of gibberellic acid (GA) biosynthesis and signaling. Modulates root architecture, phosphatase activity, and Pi uptake and accumulation. In Arabidopsis thaliana (Mouse-ear cress), this protein is Transcription factor MYB62.